The following is a 132-amino-acid chain: Small ribosomal subunit protein uS8 (132 aa).

The protein belongs to the universal ribosomal protein uS8 family. As to quaternary structure, part of the 30S ribosomal subunit. Contacts proteins S5 and S12.

In terms of biological role, one of the primary rRNA binding proteins, it binds directly to 16S rRNA central domain where it helps coordinate assembly of the platform of the 30S subunit. This is Small ribosomal subunit protein uS8 from Streptococcus sanguinis (strain SK36).